Here is a 192-residue protein sequence, read N- to C-terminus: Cytidylate kinase (192 aa).

7-15 (GPPGAGKST) provides a ligand contact to ATP.

This sequence belongs to the cytidylate kinase family. Type 2 subfamily.

The protein resides in the cytoplasm. It catalyses the reaction CMP + ATP = CDP + ADP. It carries out the reaction dCMP + ATP = dCDP + ADP. This chain is Cytidylate kinase, found in Haloquadratum walsbyi (strain DSM 16790 / HBSQ001).